The chain runs to 143 residues: Large ribosomal subunit protein uL15 (143 aa).

Residues 1-52 form a disordered region; the sequence is MKLNTLAPAAGSKSAPKRLGRGIGSGLGKTSGKGHKGQKARSGGYHKVGFEG. Over residues 21 to 31 the composition is skewed to gly residues; the sequence is RGIGSGLGKTS.

The protein belongs to the universal ribosomal protein uL15 family. In terms of assembly, part of the 50S ribosomal subunit.

Functionally, binds to the 23S rRNA. This chain is Large ribosomal subunit protein uL15, found in Francisella tularensis subsp. mediasiatica (strain FSC147).